A 115-amino-acid chain; its full sequence is Hydrogenase maturation factor HypA (115 aa).

Residue His-2 coordinates Ni(2+). 4 residues coordinate Zn(2+): Cys-73, Cys-76, Cys-89, and Cys-92.

Belongs to the HypA/HybF family.

In terms of biological role, involved in the maturation of [NiFe] hydrogenases. Required for nickel insertion into the metal center of the hydrogenase. This is Hydrogenase maturation factor HypA from Aquifex aeolicus (strain VF5).